A 346-amino-acid polypeptide reads, in one-letter code: Phosphate acyltransferase (346 aa).

The protein belongs to the PlsX family. As to quaternary structure, homodimer. Probably interacts with PlsY.

It is found in the cytoplasm. The enzyme catalyses a fatty acyl-[ACP] + phosphate = an acyl phosphate + holo-[ACP]. The protein operates within lipid metabolism; phospholipid metabolism. Catalyzes the reversible formation of acyl-phosphate (acyl-PO(4)) from acyl-[acyl-carrier-protein] (acyl-ACP). This enzyme utilizes acyl-ACP as fatty acyl donor, but not acyl-CoA. This Deinococcus geothermalis (strain DSM 11300 / CIP 105573 / AG-3a) protein is Phosphate acyltransferase.